We begin with the raw amino-acid sequence, 299 residues long: Proline iminopeptidase (299 aa).

The AB hydrolase-1 domain occupies 29–279 (PLLLLHGGPG…SRHMAFIDEP (251 aa)). The active-site Nucleophile is S105. D245 is a catalytic residue. Catalysis depends on H272, which acts as the Proton donor.

Belongs to the peptidase S33 family.

It is found in the cell envelope. The enzyme catalyses Release of N-terminal proline from a peptide.. Releases the N-terminal proline from various substrates. The sequence is that of Proline iminopeptidase from Levilactobacillus brevis (strain ATCC 367 / BCRC 12310 / CIP 105137 / JCM 1170 / LMG 11437 / NCIMB 947 / NCTC 947) (Lactobacillus brevis).